The chain runs to 614 residues: Replication protein A 70 kDa DNA-binding subunit (614 aa).

Positions 112-178 are disordered; sequence GNPVPYNEGQ…SSVKTPGGTQ (67 aa). Polar residues-rich tracts occupy residues 120-130 and 158-178; these read GQGQQRSSAPT and PSNQ…GGTQ. Positions 194 to 278 form a DNA-binding region, OB; that stretch reads WTICARVTQK…VKNDYEITFN (85 aa). The C4-type zinc-finger motif lies at 478–500; the sequence is CPSQDCNKKVIDQQNGLYRCEKC.

This sequence belongs to the replication factor A protein 1 family. As to quaternary structure, component of the heterotrimeric canonical replication protein A complex (RPA).

The protein resides in the nucleus. It is found in the PML body. In terms of biological role, as part of the heterotrimeric replication protein A complex (RPA/RP-A), binds and stabilizes single-stranded DNA intermediates, that form during DNA replication or upon DNA stress. It prevents their reannealing and in parallel, recruits and activates different proteins and complexes involved in DNA metabolism. Thereby, it plays an essential role both in DNA replication and the cellular response to DNA damage. The polypeptide is Replication protein A 70 kDa DNA-binding subunit (RPA1) (Gallus gallus (Chicken)).